The chain runs to 1371 residues: DNA-directed RNA polymerase subunit beta' (1371 aa).

Residues cysteine 71, cysteine 73, cysteine 86, and cysteine 89 each coordinate Zn(2+). Positions 461, 463, and 465 each coordinate Mg(2+). Zn(2+) is bound by residues cysteine 803, cysteine 877, cysteine 884, and cysteine 887.

Belongs to the RNA polymerase beta' chain family. The RNAP catalytic core consists of 2 alpha, 1 beta, 1 beta' and 1 omega subunit. When a sigma factor is associated with the core the holoenzyme is formed, which can initiate transcription. Mg(2+) is required as a cofactor. Requires Zn(2+) as cofactor.

It catalyses the reaction RNA(n) + a ribonucleoside 5'-triphosphate = RNA(n+1) + diphosphate. Its function is as follows. DNA-dependent RNA polymerase catalyzes the transcription of DNA into RNA using the four ribonucleoside triphosphates as substrates. The chain is DNA-directed RNA polymerase subunit beta' from Thermodesulfovibrio yellowstonii (strain ATCC 51303 / DSM 11347 / YP87).